A 152-amino-acid chain; its full sequence is MTITDLVLILFIAALLVYALYDQFIMPRRNGPTLLSIALLRRGRVDSVIFVGLVAILIYNNVTSHGAQMTTWLLSALALMGFYIFWIRTPRIIFKQRGFFFANVWIEYNRIKEMNLSEDGVLVMQLEQRRLLIRVHNIDDLEKIYKLLIENQ.

Transmembrane regions (helical) follow at residues 6–26 (LVLI…QFIM), 45–65 (VDSV…VTSH), and 67–87 (AQMT…IFWI).

It belongs to the UPF0266 family.

It is found in the cell inner membrane. The sequence is that of UPF0266 membrane protein YobD from Salmonella paratyphi A (strain ATCC 9150 / SARB42).